Reading from the N-terminus, the 1183-residue chain is DNA-directed RNA polymerase subunit beta' (1183 aa).

Zn(2+) is bound by residues C60, C62, C75, and C78. Residues D449, D451, and D453 each contribute to the Mg(2+) site. Positions 794, 867, 874, and 877 each coordinate Zn(2+).

Belongs to the RNA polymerase beta' chain family. In terms of assembly, the RNAP catalytic core consists of 2 alpha, 1 beta, 1 beta' and 1 omega subunit. When a sigma factor is associated with the core the holoenzyme is formed, which can initiate transcription. Requires Mg(2+) as cofactor. Zn(2+) is required as a cofactor.

It catalyses the reaction RNA(n) + a ribonucleoside 5'-triphosphate = RNA(n+1) + diphosphate. Functionally, DNA-dependent RNA polymerase catalyzes the transcription of DNA into RNA using the four ribonucleoside triphosphates as substrates. The protein is DNA-directed RNA polymerase subunit beta' of Caldanaerobacter subterraneus subsp. tengcongensis (strain DSM 15242 / JCM 11007 / NBRC 100824 / MB4) (Thermoanaerobacter tengcongensis).